A 94-amino-acid polypeptide reads, in one-letter code: Small ribosomal subunit protein uS19 (94 aa).

It belongs to the universal ribosomal protein uS19 family.

Its function is as follows. Protein S19 forms a complex with S13 that binds strongly to the 16S ribosomal RNA. The polypeptide is Small ribosomal subunit protein uS19 (rpsS) (Lactobacillus acidophilus (strain ATCC 700396 / NCK56 / N2 / NCFM)).